The primary structure comprises 1694 residues: Clathrin heavy chain (1694 aa).

Positions 1–478 (MTNLPIRFQE…HDRKLALSIY (478 aa)) are globular terminal domain. WD40-like repeat stretches follow at residues 23-67 (SIGF…KQMK), 68-107 (TDAAIMNPKEPILALKIGQVLQLISIEQKMQLKSCQMQEP), 108-149 (LEFW…PDLQ), 150-195 (NTEI…QSIE), 196-256 (GHAA…EIGA), 257-300 (SDFP…ISNE), and 301-329 (NIFVTAFEESTNGIIAVNRKGQVLSVSID). The tract at residues 448-464 (EKWLTEDKLECSEQLGD) is binding site for the uncoating ATPase, involved in lattice disassembly. Residues 479–522 (YRANASDKVITLFAETGEFDKIIAYCKKFNYKPDFMFLLQRMAN) are flexible linker. The tract at residues 523 to 1694 (ANPMGAADFA…QQNYNQYGGF (1172 aa)) is heavy chain arm. CHCR repeat units follow at residues 537–681 (KEEG…QNLQ), 687–829 (AVSY…QEDY), 834–973 (IMSV…SLID), 980–1125 (LPES…VKEC), 1129–1270 (FIKA…FRLA), 1275–1421 (INII…LLIN), and 1424–1567 (LSVL…NSAF). An involved in binding clathrin light chain region spans residues 1214–1523 (AAKVLYTNIS…YLYKKNNRWA (310 aa)). The segment at 1551-1694 (GEELLQYFVD…QQNYNQYGGF (144 aa)) is trimerization. A coiled-coil region spans residues 1610–1640 (KVDQLVDDFKARQKKTEEEKEQQNIESSQYQ).

This sequence belongs to the clathrin heavy chain family. Clathrin coats are formed from molecules containing 3 heavy chains and 3 light chains.

The protein localises to the cytoplasmic vesicle membrane. Its subcellular location is the membrane. It is found in the coated pit. In terms of biological role, clathrin is the major protein of the polyhedral coat of coated pits and vesicles. The polypeptide is Clathrin heavy chain (chcA) (Dictyostelium discoideum (Social amoeba)).